A 258-amino-acid polypeptide reads, in one-letter code: Peroxisomal membrane protein 11B (258 aa).

Lysine 43 bears the N6-acetyllysine mark. The interaction with PEX19, PEX11G and FIS1 and peroxisome targeting stretch occupies residues valine 210–proline 258. The helical transmembrane segment at glycine 232–leucine 254 threads the bilayer.

The protein belongs to the peroxin-11 family. Homodimer. Heterodimer with PEX11G. Interacts with PEX19. Interacts with FIS1.

The protein resides in the peroxisome membrane. Its function is as follows. Involved in peroxisomal proliferation. May regulate peroxisome division by recruiting the dynamin-related GTPase DNM1L to the peroxisomal membrane. Promotes membrane protrusion and elongation on the peroxisomal surface. The chain is Peroxisomal membrane protein 11B (PEX11B) from Bos taurus (Bovine).